A 422-amino-acid polypeptide reads, in one-letter code: Glutamyl-tRNA reductase (422 aa).

Substrate-binding positions include 49–52, Ser-107, 112–114, and Gln-118; these read TCNR and EPQ. The active-site Nucleophile is Cys-50. NADP(+) is bound at residue 187-192; it reads GAGETI.

The protein belongs to the glutamyl-tRNA reductase family. In terms of assembly, homodimer.

It catalyses the reaction (S)-4-amino-5-oxopentanoate + tRNA(Glu) + NADP(+) = L-glutamyl-tRNA(Glu) + NADPH + H(+). It participates in porphyrin-containing compound metabolism; protoporphyrin-IX biosynthesis; 5-aminolevulinate from L-glutamyl-tRNA(Glu): step 1/2. Functionally, catalyzes the NADPH-dependent reduction of glutamyl-tRNA(Glu) to glutamate 1-semialdehyde (GSA). This Stutzerimonas stutzeri (strain A1501) (Pseudomonas stutzeri) protein is Glutamyl-tRNA reductase.